A 478-amino-acid polypeptide reads, in one-letter code: Membrane-bound lytic murein transglycosylase F (478 aa).

An N-terminal signal peptide occupies residues 1 to 22; that stretch reads MTRFLFAIILGFLLTACQQVTV. The segment at 23-257 is non-LT domain; it reads EETEYVPHKL…HLNEKYFGHV (235 aa). The LT domain stretch occupies residues 258–478; it reads KRFDYIDTRA…PGTLSPDKPK (221 aa). The active site involves Glu-302. The disordered stretch occupies residues 446–478; the sequence is SKQQNSDEEEPSDLASEDGPAPVPGTLSPDKPK. A compositionally biased stretch (acidic residues) spans 451-461; that stretch reads SDEEEPSDLAS.

This sequence in the N-terminal section; belongs to the bacterial solute-binding protein 3 family. The protein in the C-terminal section; belongs to the transglycosylase Slt family.

The protein resides in the cell outer membrane. It catalyses the reaction Exolytic cleavage of the (1-&gt;4)-beta-glycosidic linkage between N-acetylmuramic acid (MurNAc) and N-acetylglucosamine (GlcNAc) residues in peptidoglycan, from either the reducing or the non-reducing ends of the peptidoglycan chains, with concomitant formation of a 1,6-anhydrobond in the MurNAc residue.. Its function is as follows. Murein-degrading enzyme that degrades murein glycan strands and insoluble, high-molecular weight murein sacculi, with the concomitant formation of a 1,6-anhydromuramoyl product. Lytic transglycosylases (LTs) play an integral role in the metabolism of the peptidoglycan (PG) sacculus. Their lytic action creates space within the PG sacculus to allow for its expansion as well as for the insertion of various structures such as secretion systems and flagella. The sequence is that of Membrane-bound lytic murein transglycosylase F from Shewanella sp. (strain ANA-3).